Consider the following 380-residue polypeptide: Carbamoyl phosphate synthase small chain (380 aa).

The interval 1 to 184 (MTTSTRGAHR…EAYVVPAIGE (184 aa)) is CPSase. Residues S55, G236, and G238 each contribute to the L-glutamine site. The 193-residue stretch at 188-380 (TVAAVDLGIK…FVNLMEGQRA (193 aa)) folds into the Glutamine amidotransferase type-1 domain. C264 serves as the catalytic Nucleophile. L-glutamine contacts are provided by F265, Q268, N306, G308, and F309. Residues H354 and E356 contribute to the active site.

Belongs to the CarA family. In terms of assembly, composed of two chains; the small (or glutamine) chain promotes the hydrolysis of glutamine to ammonia, which is used by the large (or ammonia) chain to synthesize carbamoyl phosphate. Tetramer of heterodimers (alpha,beta)4.

The catalysed reaction is hydrogencarbonate + L-glutamine + 2 ATP + H2O = carbamoyl phosphate + L-glutamate + 2 ADP + phosphate + 2 H(+). The enzyme catalyses L-glutamine + H2O = L-glutamate + NH4(+). It functions in the pathway amino-acid biosynthesis; L-arginine biosynthesis; carbamoyl phosphate from bicarbonate: step 1/1. The protein operates within pyrimidine metabolism; UMP biosynthesis via de novo pathway; (S)-dihydroorotate from bicarbonate: step 1/3. In terms of biological role, small subunit of the glutamine-dependent carbamoyl phosphate synthetase (CPSase). CPSase catalyzes the formation of carbamoyl phosphate from the ammonia moiety of glutamine, carbonate, and phosphate donated by ATP, constituting the first step of 2 biosynthetic pathways, one leading to arginine and/or urea and the other to pyrimidine nucleotides. The small subunit (glutamine amidotransferase) binds and cleaves glutamine to supply the large subunit with the substrate ammonia. This chain is Carbamoyl phosphate synthase small chain, found in Streptomyces coelicolor (strain ATCC BAA-471 / A3(2) / M145).